The sequence spans 257 residues: Transmembrane protein 101 (257 aa).

The next 8 helical transmembrane spans lie at 21–40, 52–72, 77–97, 110–130, 139–159, 182–202, 206–226, and 233–253; these read VLLTRCPFWGCFSQLMLYAE, VPYLYFDMGAAVLCASFMSFG, WFALGAALQLAISTYAAYVGG, YSRTVAIIGGFLVLASGAGEL, SLQSTGQVFLGVYLVCVAYSL, LFFVLYGVLALAFLSGYYVTL, ILAVLLPPVMLLIDGNVAYWH, and FWNQMKLLGESVGIFGAAVIL.

It localises to the membrane. Functionally, may activate NF-kappa-B signaling pathways. The protein is Transmembrane protein 101 (TMEM101) of Bos taurus (Bovine).